Here is a 223-residue protein sequence, read N- to C-terminus: Fibroblast growth factor-binding protein 2 (223 aa).

The N-terminal stretch at 1–19 (MKFVPCLLLVTLSCLGTLG) is a signal peptide. The tract at residues 23–45 (RQKQGSTGEEFHFQTGGRDSCTM) is disordered. 3 disulfide bridges follow: Cys43-Cys63, Cys72-Cys106, and Cys81-Cys117. Residues 120–201 (AGPQAHMQQV…PGGNEEAKKK (82 aa)) form a disordered region. Over residues 125 to 144 (HMQQVTSSLKGSPEPNQQPE) the composition is skewed to polar residues. Over residues 175–186 (AKPTTRPTAKPT) the composition is skewed to low complexity. A disulfide bond links Cys206 and Cys214.

This sequence belongs to the fibroblast growth factor-binding protein family. As to expression, expressed in serum, peripheral leukocytes and cytotoxic T-lymphocytes, but not in granulocytes and monocytes (at protein level).

Its subcellular location is the secreted. It localises to the extracellular space. In Homo sapiens (Human), this protein is Fibroblast growth factor-binding protein 2 (FGFBP2).